Reading from the N-terminus, the 707-residue chain is Elongation factor G (707 aa).

Positions 8-297 (ERVRNIGIAA…AVVDYLPSPV (290 aa)) constitute a tr-type G domain. GTP contacts are provided by residues 17 to 24 (AHIDAGKT), 96 to 100 (DTPGH), and 150 to 153 (NKMD).

It belongs to the TRAFAC class translation factor GTPase superfamily. Classic translation factor GTPase family. EF-G/EF-2 subfamily.

Its subcellular location is the cytoplasm. In terms of biological role, catalyzes the GTP-dependent ribosomal translocation step during translation elongation. During this step, the ribosome changes from the pre-translocational (PRE) to the post-translocational (POST) state as the newly formed A-site-bound peptidyl-tRNA and P-site-bound deacylated tRNA move to the P and E sites, respectively. Catalyzes the coordinated movement of the two tRNA molecules, the mRNA and conformational changes in the ribosome. The protein is Elongation factor G of Synechococcus sp. (strain JA-2-3B'a(2-13)) (Cyanobacteria bacterium Yellowstone B-Prime).